We begin with the raw amino-acid sequence, 615 residues long: MSKKFAHTQEELEKLSLKELENLAASMREKIIQVVSKNGGHLSSNLGAVELSIAMHLVFDAKKDPFIFDVSHQSYTHKLLSGKEEIFDTLRQINGLSGYTKPSEGDYFVAGHSSTSISLAVGACKAIALKGEKRIPVALIGDGALSAGMVYEALNELGDSKFPCVILLNDNEMSISKPIGAISKYLSQAMATQFYQSFKKRIAKMLDILPNSATYMAKRFEESFKLITPGLLFEELGLEYIGPIDGHNLGEIISALKQAKAIQKPCVIHAQTVKGKGYALAEGKHAKWHGVGAFDIDSGESVKKNDAKKSATEIFSKNLLDLASKYENIVGVTAAMPSGTGLDKLIEKYPNRFWDVAIAEQHAVTSMAAMAKEGFKPFIAIYSTFLQRAYDQVIHDCAIMNLNVVFAMDRAGIVGEDGETHQGVFDLSFLAPLPNFTLLAPRDEQMMHNIMEYAYLHQGPIAFRYPRGSFILDEEFNPCEIKFGKAQWLVKNSSEIAFLGYGQGVAKAWQVLRALQEMNNNANLIDLIFAKPLDEELLCELAKKSKIWFIFSENVKIGGIESLINNFLQKYDLHVKVISFEYEDKFIEHGKTSEVEKNLEKDINSLLTKVLKFHH.

Thiamine diphosphate-binding positions include His-72 and 111-113 (GHS). Asp-142 contacts Mg(2+). Thiamine diphosphate contacts are provided by residues 143 to 144 (GA), Asn-171, Tyr-278, and Glu-360. Asn-171 contacts Mg(2+).

The protein belongs to the transketolase family. DXPS subfamily. As to quaternary structure, homodimer. Requires Mg(2+) as cofactor. It depends on thiamine diphosphate as a cofactor.

The enzyme catalyses D-glyceraldehyde 3-phosphate + pyruvate + H(+) = 1-deoxy-D-xylulose 5-phosphate + CO2. The protein operates within metabolic intermediate biosynthesis; 1-deoxy-D-xylulose 5-phosphate biosynthesis; 1-deoxy-D-xylulose 5-phosphate from D-glyceraldehyde 3-phosphate and pyruvate: step 1/1. Catalyzes the acyloin condensation reaction between C atoms 2 and 3 of pyruvate and glyceraldehyde 3-phosphate to yield 1-deoxy-D-xylulose-5-phosphate (DXP). The sequence is that of 1-deoxy-D-xylulose-5-phosphate synthase from Campylobacter jejuni subsp. doylei (strain ATCC BAA-1458 / RM4099 / 269.97).